A 452-amino-acid chain; its full sequence is Phosphoglucosamine mutase (452 aa).

The Phosphoserine intermediate role is filled by S101. Residues S101, D241, D243, and D245 each coordinate Mg(2+). S101 carries the phosphoserine modification.

The protein belongs to the phosphohexose mutase family. Mg(2+) is required as a cofactor. Post-translationally, activated by phosphorylation.

It catalyses the reaction alpha-D-glucosamine 1-phosphate = D-glucosamine 6-phosphate. In terms of biological role, catalyzes the conversion of glucosamine-6-phosphate to glucosamine-1-phosphate. The protein is Phosphoglucosamine mutase of Lactococcus lactis subsp. lactis (strain IL1403) (Streptococcus lactis).